Consider the following 144-residue polypeptide: Peptide methionine sulfoxide reductase MsrB (144 aa).

Residues 5–128 form the MsrB domain; that stretch reads KEELRQRIGE…NSAALQFIPV (124 aa). Catalysis depends on Cys-117, which acts as the Nucleophile.

The protein belongs to the MsrB Met sulfoxide reductase family.

The enzyme catalyses L-methionyl-[protein] + [thioredoxin]-disulfide + H2O = L-methionyl-(R)-S-oxide-[protein] + [thioredoxin]-dithiol. This Ligilactobacillus salivarius (strain UCC118) (Lactobacillus salivarius) protein is Peptide methionine sulfoxide reductase MsrB.